The primary structure comprises 136 residues: NADPH-dependent 7-cyano-7-deazaguanine reductase (136 aa).

Cys50 acts as the Thioimide intermediate in catalysis. Asp57 (proton donor) is an active-site residue. Residues 72–74 (YEL) and 91–92 (HE) contribute to the substrate site.

Belongs to the GTP cyclohydrolase I family. QueF type 1 subfamily.

The protein resides in the cytoplasm. The enzyme catalyses 7-aminomethyl-7-carbaguanine + 2 NADP(+) = 7-cyano-7-deazaguanine + 2 NADPH + 3 H(+). It participates in tRNA modification; tRNA-queuosine biosynthesis. In terms of biological role, catalyzes the NADPH-dependent reduction of 7-cyano-7-deazaguanine (preQ0) to 7-aminomethyl-7-deazaguanine (preQ1). The protein is NADPH-dependent 7-cyano-7-deazaguanine reductase of Prochlorococcus marinus (strain MIT 9312).